Reading from the N-terminus, the 595-residue chain is 73 kDa paraflagellar rod protein (595 aa).

A disordered region spans residues 294-317 (DAEATKRHAANKEKSDRYIRENED). Residues 317-337 (DRQEETWNKIQDLERQLQKLG) form a calmodulin-binding region.

As to quaternary structure, heterodimer of a 69 kDa and a 73 kDa protein.

Its subcellular location is the cell projection. The protein resides in the cilium. The protein localises to the flagellum. It is found in the cytoplasm. It localises to the cytoskeleton. Functionally, major component of the paraflagellar rod (PFR). The PFR is a highly ordered lattices of fibrous proteins that are located inside the flagellum and assume a fixed orientation with respect to the microtubular axoneme. This chain is 73 kDa paraflagellar rod protein (PFRC), found in Trypanosoma brucei brucei.